We begin with the raw amino-acid sequence, 464 residues long: Fumarate hydratase class II (464 aa).

Substrate-binding positions include 98-100 (SGT), 129-132 (HPND), 139-141 (SSN), and Thr-187. His-188 acts as the Proton donor/acceptor in catalysis. Residue Ser-318 is part of the active site. Substrate-binding positions include Ser-319 and 324 to 326 (KVN).

The protein belongs to the class-II fumarase/aspartase family. Fumarase subfamily. Homotetramer.

The protein resides in the cytoplasm. The enzyme catalyses (S)-malate = fumarate + H2O. It functions in the pathway carbohydrate metabolism; tricarboxylic acid cycle; (S)-malate from fumarate: step 1/1. In terms of biological role, involved in the TCA cycle. Catalyzes the stereospecific interconversion of fumarate to L-malate. The protein is Fumarate hydratase class II of Pasteurella multocida (strain Pm70).